The primary structure comprises 509 residues: Probable glycine dehydrogenase (decarboxylating) subunit 2 (509 aa).

An N6-(pyridoxal phosphate)lysine modification is found at Lys278.

Belongs to the GcvP family. C-terminal subunit subfamily. The glycine cleavage system is composed of four proteins: P, T, L and H. In this organism, the P 'protein' is a heterodimer of two subunits. Pyridoxal 5'-phosphate is required as a cofactor.

It catalyses the reaction N(6)-[(R)-lipoyl]-L-lysyl-[glycine-cleavage complex H protein] + glycine + H(+) = N(6)-[(R)-S(8)-aminomethyldihydrolipoyl]-L-lysyl-[glycine-cleavage complex H protein] + CO2. The glycine cleavage system catalyzes the degradation of glycine. The P protein binds the alpha-amino group of glycine through its pyridoxal phosphate cofactor; CO(2) is released and the remaining methylamine moiety is then transferred to the lipoamide cofactor of the H protein. This Saccharolobus islandicus (strain Y.N.15.51 / Yellowstone #2) (Sulfolobus islandicus) protein is Probable glycine dehydrogenase (decarboxylating) subunit 2.